A 775-amino-acid polypeptide reads, in one-letter code: Putative ankyrin repeat protein RBE_0801 (775 aa).

ANK repeat units follow at residues His66–Glu95, Ala300–Asn329, Ile331–Phe356, Thr357–Gly385, Ile447–Phe476, and Gly523–Ile552.

This chain is Putative ankyrin repeat protein RBE_0801, found in Rickettsia bellii (strain RML369-C).